The chain runs to 147 residues: Ribosome-binding factor A (147 aa).

A disordered region spans residues 122-147 (QQQFGSVDDDVIENDIEESDDTEGKV). The span at 128–147 (VDDDVIENDIEESDDTEGKV) shows a compositional bias: acidic residues.

This sequence belongs to the RbfA family. As to quaternary structure, monomer. Binds 30S ribosomal subunits, but not 50S ribosomal subunits or 70S ribosomes.

The protein resides in the cytoplasm. Functionally, one of several proteins that assist in the late maturation steps of the functional core of the 30S ribosomal subunit. Associates with free 30S ribosomal subunits (but not with 30S subunits that are part of 70S ribosomes or polysomes). Required for efficient processing of 16S rRNA. May interact with the 5'-terminal helix region of 16S rRNA. The chain is Ribosome-binding factor A from Shewanella oneidensis (strain ATCC 700550 / JCM 31522 / CIP 106686 / LMG 19005 / NCIMB 14063 / MR-1).